Reading from the N-terminus, the 199-residue chain is Charged multivesicular body protein 1b (199 aa).

Residues 26-48 (DKEEKAEKAKIKKAIQKGNMEVA) adopt a coiled-coil conformation. Residues 132–156 (MEDTMSSTTTLTTPQGQVDMLLQEM) form an interaction with IST1 region. Residues 167–199 (ELPQGQTGSVGTSVASAEQDELSQRLARLRDQV) are disordered. Polar residues predominate over residues 170–182 (QGQTGSVGTSVAS). An interaction with SPAST region spans residues 174–199 (GSVGTSVASAEQDELSQRLARLRDQV). The stretch at 178 to 199 (TSVASAEQDELSQRLARLRDQV) forms a coiled coil. Residues 180–196 (VASAEQDELSQRLARLR) are interaction with VPS4A, MITD1 and STAMBP. An interaction with VTA1 region spans residues 180–199 (VASAEQDELSQRLARLRDQV). An interaction with VPS4B region spans residues 183 to 199 (AEQDELSQRLARLRDQV). The MIT-interacting motif motif lies at 186–196 (DELSQRLARLR).

Belongs to the SNF7 family. Probable peripherally associated component of the endosomal sorting required for transport complex III (ESCRT-III). ESCRT-III components are thought to multimerize to form a flat lattice on the perimeter membrane of the endosome. Several assembly forms of ESCRT-III may exist that interact and act sequentially. Interacts with CHMP1A. Interacts with VTA1; the interaction probably involves the open conformation of CHMP1B. Interacts with CHMP2A. Interacts with VPS4A; the interaction is direct. Interacts with VPS4B; the interaction is direct. Interacts with SPAST (via MIT domain); the interaction is direct. Interacts with IST1. Interacts with MITD1. Interacts with STAMBP.

The protein resides in the cytoplasm. The protein localises to the cytosol. It localises to the endosome. Its subcellular location is the late endosome membrane. In terms of biological role, probable peripherally associated component of the endosomal sorting required for transport complex III (ESCRT-III) which is involved in multivesicular bodies (MVBs) formation and sorting of endosomal cargo proteins into MVBs. MVBs contain intraluminal vesicles (ILVs) that are generated by invagination and scission from the limiting membrane of the endosome and mostly are delivered to lysosomes enabling degradation of membrane proteins, such as stimulated growth factor receptors, lysosomal enzymes and lipids. The MVB pathway appears to require the sequential function of ESCRT-O, -I,-II and -III complexes. ESCRT-III proteins mostly dissociate from the invaginating membrane before the ILV is released. The ESCRT machinery also functions in topologically equivalent membrane fission events, such as the terminal stages of cytokinesis and the budding of enveloped viruses (lentiviruses). ESCRT-III proteins are believed to mediate the necessary vesicle extrusion and/or membrane fission activities, possibly in conjunction with the AAA ATPase VPS4. Involved in cytokinesis. Involved in recruiting VPS4A and/or VPS4B and SPAST to the midbody of dividing cells. The sequence is that of Charged multivesicular body protein 1b (CHMP1B) from Bos taurus (Bovine).